The following is a 578-amino-acid chain: Isocitrate dehydrogenase kinase/phosphatase (578 aa).

ATP contacts are provided by residues 315–321 and Lys336; that span reads APGIRGM. Asp371 is an active-site residue.

This sequence belongs to the AceK family.

Its subcellular location is the cytoplasm. The enzyme catalyses L-seryl-[isocitrate dehydrogenase] + ATP = O-phospho-L-seryl-[isocitrate dehydrogenase] + ADP + H(+). Its function is as follows. Bifunctional enzyme which can phosphorylate or dephosphorylate isocitrate dehydrogenase (IDH) on a specific serine residue. This is a regulatory mechanism which enables bacteria to bypass the Krebs cycle via the glyoxylate shunt in response to the source of carbon. When bacteria are grown on glucose, IDH is fully active and unphosphorylated, but when grown on acetate or ethanol, the activity of IDH declines drastically concomitant with its phosphorylation. The protein is Isocitrate dehydrogenase kinase/phosphatase of Escherichia coli O17:K52:H18 (strain UMN026 / ExPEC).